Here is a 323-residue protein sequence, read N- to C-terminus: DNA-directed RNA polymerase subunit alpha (323 aa).

Positions methionine 1–asparagine 225 are alpha N-terminal domain (alpha-NTD). An alpha C-terminal domain (alpha-CTD) region spans residues proline 243–serine 323.

This sequence belongs to the RNA polymerase alpha chain family. In terms of assembly, homodimer. The RNAP catalytic core consists of 2 alpha, 1 beta, 1 beta' and 1 omega subunit. When a sigma factor is associated with the core the holoenzyme is formed, which can initiate transcription.

It carries out the reaction RNA(n) + a ribonucleoside 5'-triphosphate = RNA(n+1) + diphosphate. DNA-dependent RNA polymerase catalyzes the transcription of DNA into RNA using the four ribonucleoside triphosphates as substrates. This is DNA-directed RNA polymerase subunit alpha from Roseiflexus castenholzii (strain DSM 13941 / HLO8).